The primary structure comprises 370 residues: Putative F-box protein At3g10430 (370 aa).

Positions 1 to 47 (MGSSLPFDLILEILQRTPAESLLRFKSTCKKWYELISNDKRFMYKHL) constitute an F-box domain.

The chain is Putative F-box protein At3g10430 from Arabidopsis thaliana (Mouse-ear cress).